Consider the following 100-residue polypeptide: Integration host factor subunit alpha (100 aa).

This sequence belongs to the bacterial histone-like protein family. As to quaternary structure, heterodimer of an alpha and a beta chain.

Functionally, this protein is one of the two subunits of integration host factor, a specific DNA-binding protein that functions in genetic recombination as well as in transcriptional and translational control. This is Integration host factor subunit alpha from Jannaschia sp. (strain CCS1).